Reading from the N-terminus, the 184-residue chain is ATP synthase subunit b, chloroplastic (184 aa).

Residues leucine 27–leucine 49 form a helical membrane-spanning segment.

It belongs to the ATPase B chain family. As to quaternary structure, F-type ATPases have 2 components, F(1) - the catalytic core - and F(0) - the membrane proton channel. F(1) has five subunits: alpha(3), beta(3), gamma(1), delta(1), epsilon(1). F(0) has four main subunits: a(1), b(1), b'(1) and c(10-14). The alpha and beta chains form an alternating ring which encloses part of the gamma chain. F(1) is attached to F(0) by a central stalk formed by the gamma and epsilon chains, while a peripheral stalk is formed by the delta, b and b' chains.

The protein resides in the plastid. Its subcellular location is the chloroplast thylakoid membrane. F(1)F(0) ATP synthase produces ATP from ADP in the presence of a proton or sodium gradient. F-type ATPases consist of two structural domains, F(1) containing the extramembraneous catalytic core and F(0) containing the membrane proton channel, linked together by a central stalk and a peripheral stalk. During catalysis, ATP synthesis in the catalytic domain of F(1) is coupled via a rotary mechanism of the central stalk subunits to proton translocation. In terms of biological role, component of the F(0) channel, it forms part of the peripheral stalk, linking F(1) to F(0). The chain is ATP synthase subunit b, chloroplastic from Atropa belladonna (Belladonna).